The following is a 20-amino-acid chain: Implantin (20 aa).

The protein belongs to the EF-1-beta/EF-1-delta family. Phosphorylated. As to expression, uterus and embryo.

It is found in the cytoplasm. The protein localises to the nucleus. Binds DNA. The protein is Implantin of Mus musculus (Mouse).